A 373-amino-acid polypeptide reads, in one-letter code: Glutamate 5-kinase 2 (373 aa).

Lys-11 lines the ATP pocket. Ser-51, Asp-138, and Asn-150 together coordinate substrate. Residues 170-171 and 212-218 each bind ATP; these read SD and TGGMKSK. The 77-residue stretch at 279-355 folds into the PUA domain; it reads EGDIVVHNES…TNQETAASSQ (77 aa).

The protein belongs to the glutamate 5-kinase family.

It localises to the cytoplasm. The enzyme catalyses L-glutamate + ATP = L-glutamyl 5-phosphate + ADP. The protein operates within amino-acid biosynthesis; L-proline biosynthesis; L-glutamate 5-semialdehyde from L-glutamate: step 1/2. Its function is as follows. Catalyzes the transfer of a phosphate group to glutamate to form L-glutamate 5-phosphate. The protein is Glutamate 5-kinase 2 of Bacillus licheniformis (strain ATCC 14580 / DSM 13 / JCM 2505 / CCUG 7422 / NBRC 12200 / NCIMB 9375 / NCTC 10341 / NRRL NRS-1264 / Gibson 46).